Consider the following 147-residue polypeptide: MKIVIQRVKEASVSIDGEIAGAIDQGLLLLVGIGPDDQAEDIDYAVRKISHMRIFSDPEGKMNLSIQDIGGSVLSVSQFTLYADTKKGNRPAFTGAAKPAMASELYDTFNAQLEQLVPVQRGVFGADMQISLTNDGPVTIILDTKHR.

The Gly-cisPro motif, important for rejection of L-amino acids motif lies at 136–137 (GP).

It belongs to the DTD family. As to quaternary structure, homodimer.

The protein resides in the cytoplasm. The catalysed reaction is glycyl-tRNA(Ala) + H2O = tRNA(Ala) + glycine + H(+). The enzyme catalyses a D-aminoacyl-tRNA + H2O = a tRNA + a D-alpha-amino acid + H(+). Functionally, an aminoacyl-tRNA editing enzyme that deacylates mischarged D-aminoacyl-tRNAs. Also deacylates mischarged glycyl-tRNA(Ala), protecting cells against glycine mischarging by AlaRS. Acts via tRNA-based rather than protein-based catalysis; rejects L-amino acids rather than detecting D-amino acids in the active site. By recycling D-aminoacyl-tRNA to D-amino acids and free tRNA molecules, this enzyme counteracts the toxicity associated with the formation of D-aminoacyl-tRNA entities in vivo and helps enforce protein L-homochirality. The chain is D-aminoacyl-tRNA deacylase from Streptococcus equi subsp. zooepidemicus (strain H70).